Reading from the N-terminus, the 1386-residue chain is Rab3 GTPase-activating protein non-catalytic subunit (1386 aa).

The interval 31–69 is disordered; sequence GALRRDPSKTSNWEDDSWGAWEETEPQEPEEEGNTSKTQ. At Ser38 the chain carries Phosphoserine. The segment covering 43 to 63 has biased composition (acidic residues); sequence WEDDSWGAWEETEPQEPEEEG. Position 448 is a phosphoserine (Ser448). Thr899 bears the Phosphothreonine mark. Ser914 is subject to Phosphoserine. Residues 959-973 show a composition bias toward basic and acidic residues; sequence REKDVENPDEPREGI. Residues 959-982 form a disordered region; sequence REKDVENPDEPREGIARSPPEVSE. Ser976 is subject to Phosphoserine.

Belongs to the Rab3-GAP regulatory subunit family. In terms of assembly, the Rab3 GTPase-activating complex is a heterodimer composed of Rab3gap1 and Rab3gap2. The Rab3 GTPase-activating complex interacts with DMXL2. Interacts with LMAN1.

It is found in the cytoplasm. The protein resides in the endoplasmic reticulum. In terms of biological role, regulatory subunit of the Rab3 GTPase-activating (Rab3GAP) complex composed of RAB3GAP1 and RAB3GAP2, which has GTPase-activating protein (GAP) activity towards various Rab3 subfamily members (RAB3A, RAB3B, RAB3C and RAB3D), RAB5A and RAB43, and guanine nucleotide exchange factor (GEF) activity towards RAB18. As part of the Rab3GAP complex, acts as a GAP for Rab3 proteins by converting active RAB3-GTP to the inactive form RAB3-GDP. Rab3 proteins are involved in regulated exocytosis of neurotransmitters and hormones. The Rab3GAP complex acts as a GEF for RAB18 by promoting the conversion of inactive RAB18-GDP to the active form RAB18-GTP. Recruits and stabilizes RAB18 at the cis-Golgi membrane in fibroblasts where RAB18 is most likely activated. Also involved in RAB18 recruitment at the endoplasmic reticulum (ER) membrane where it maintains proper ER structure. Required for normal eye and brain development. May participate in neurodevelopmental processes such as proliferation, migration and differentiation before synapse formation, and non-synaptic vesicular release of neurotransmitters. This is Rab3 GTPase-activating protein non-catalytic subunit from Rattus norvegicus (Rat).